We begin with the raw amino-acid sequence, 449 residues long: tRNA (guanine(37)-N(1))-methyltransferase (449 aa).

S-adenosyl-L-methionine is bound by residues His-216, 254–255, 282–283, and Asn-345; these read DL and DG.

It belongs to the class I-like SAM-binding methyltransferase superfamily. TRM5/TYW2 family. Monomer.

Its subcellular location is the mitochondrion matrix. The protein resides in the nucleus. The protein localises to the cytoplasm. It carries out the reaction guanosine(37) in tRNA + S-adenosyl-L-methionine = N(1)-methylguanosine(37) in tRNA + S-adenosyl-L-homocysteine + H(+). In terms of biological role, specifically methylates the N1 position of guanosine-37 in various cytoplasmic and mitochondrial tRNAs. Methylation is not dependent on the nature of the nucleoside 5' of the target nucleoside. This is the first step in the biosynthesis of wybutosine (yW), a modified base adjacent to the anticodon of tRNAs and required for accurate decoding. The chain is tRNA (guanine(37)-N(1))-methyltransferase from Candida albicans (strain SC5314 / ATCC MYA-2876) (Yeast).